A 202-amino-acid polypeptide reads, in one-letter code: Putative chromophore lyase CpcV (202 aa).

It belongs to the CpcS/CpeS biliprotein lyase family.

Its function is as follows. Covalently attaches a chromophore to Cys residue(s) of phycobiliproteins. The sequence is that of Putative chromophore lyase CpcV (cpcV) from Picosynechococcus sp. (strain ATCC 27264 / PCC 7002 / PR-6) (Agmenellum quadruplicatum).